The chain runs to 99 residues: Large ribosomal subunit protein uL23 (99 aa).

It belongs to the universal ribosomal protein uL23 family. In terms of assembly, part of the 50S ribosomal subunit. Contacts protein L29, and trigger factor when it is bound to the ribosome.

One of the early assembly proteins it binds 23S rRNA. One of the proteins that surrounds the polypeptide exit tunnel on the outside of the ribosome. Forms the main docking site for trigger factor binding to the ribosome. This Lachnoclostridium phytofermentans (strain ATCC 700394 / DSM 18823 / ISDg) (Clostridium phytofermentans) protein is Large ribosomal subunit protein uL23.